Here is a 167-residue protein sequence, read N- to C-terminus: Minor fimbrial protein PrsF (167 aa).

Residues 1 to 18 (MIRLSLFISLLLTSVAVL) form the signal peptide.

Its subcellular location is the secreted. It is found in the fimbrium. Functionally, fimbriae (also called pili), polar filaments radiating from the surface of the bacterium to a length of 0.5-1.5 micrometers and numbering 100-300 per cell, enable bacteria to colonize the epithelium of specific host organs. This Escherichia coli protein is Minor fimbrial protein PrsF (prsF).